Reading from the N-terminus, the 631-residue chain is MBT domain-containing protein 1 (631 aa).

Positions 1–31 (MFDGYDSCSEDTSSSSSSEESEEEVAPLPSN) are disordered. An FCS-type zinc finger spans residues 45–80 (PDGKSGMATCEMCGMVGVRDAFYSKTKRFCSVSCSR). C54, C57, C74, and C78 together coordinate Zn(2+). Position 115 is an N6-acetyllysine (K115). MBT repeat units follow at residues 144 to 248 (FSWG…LVPP), 256 to 353 (TNWK…IGHR), 354 to 459 (FKRS…LTPP), and 467 to 563 (FKWF…LQPP). The disordered stretch occupies residues 563–631 (PASQSSRESQ…SATVYIKQEP (69 aa)). A compositionally biased stretch (low complexity) spans 564–576 (ASQSSRESQSASS). Basic residues predominate over residues 577 to 593 (KQKKKAKSQQYKGHKKM).

Monomer. Component of the NuA4 histone acetyltransferase complex. Interacts with EPC1; interaction is direct and promotes recruitment of MBTD1 into the NuA4 histone acetyltransferase complex.

Its subcellular location is the nucleus. It is found in the chromosome. In terms of biological role, chromatin reader component of the NuA4 histone acetyltransferase complex, a multiprotein complex involved in transcriptional activation of select genes principally by acetylation of nucleosomal histones H4 and H2A. The NuA4 complex plays a direct role in repair of DNA double-strand breaks (DSBs) by promoting homologous recombination (HR). MBTD1 specifically recognizes and binds monomethylated and dimethylated 'Lys-20' on histone H4 (H4K20me1 and H4K20me2, respectively). In the NuA4 complex, MBTD1 promotes recruitment of the complex to H4K20me marks by competing with TP53BP1 for binding to H4K20me. Following recruitment to H4K20me at DNA breaks, the NuA4 complex catalyzes acetylation of 'Lys-15' on histone H2A (H2AK15), blocking the ubiquitination mark required for TP53BP1 localization at DNA breaks, thereby promoting homologous recombination (HR). This chain is MBT domain-containing protein 1, found in Mus musculus (Mouse).